We begin with the raw amino-acid sequence, 538 residues long: Mitochondrial distribution and morphology protein 34 (538 aa).

The 224-residue stretch at 1 to 224 (MSFRFDRSVF…LPTALFNMSQ (224 aa)) folds into the SMP-LTD domain. 2 disordered regions span residues 26 to 55 (ALNPKSRRHVERADEAGNEDDSSGHQRKSG) and 231 to 251 (DGSRSSAKHKKDTCDENNQPS).

It belongs to the MDM34 family. Component of the ER-mitochondria encounter structure (ERMES) or MDM complex, composed of MMM1, MDM10, MDM12 and MDM34.

It localises to the mitochondrion outer membrane. In terms of biological role, component of the ERMES/MDM complex, which serves as a molecular tether to connect the endoplasmic reticulum (ER) and mitochondria. Components of this complex are involved in the control of mitochondrial shape and protein biogenesis, and function in nonvesicular lipid trafficking between the ER and mitochondria. MDM34 is required for the interaction of the ER-resident membrane protein MMM1 and the outer mitochondrial membrane-resident beta-barrel protein MDM10. The polypeptide is Mitochondrial distribution and morphology protein 34 (Candida glabrata (strain ATCC 2001 / BCRC 20586 / JCM 3761 / NBRC 0622 / NRRL Y-65 / CBS 138) (Yeast)).